Here is a 446-residue protein sequence, read N- to C-terminus: Methanol utilization control sensor protein MoxY (446 aa).

Transmembrane regions (helical) follow at residues Met1 to Val21, Trp101 to Pro121, and Phe144 to Leu164. The 53-residue stretch at Thr167–Ala219 folds into the HAMP domain. The segment at Thr390–Gln409 is disordered.

It is found in the cell inner membrane. Member of the two-component regulatory system MoxY/MoxX probably involved in the regulation of the methanol dehydrogenase expression. May function as a membrane-associated protein kinase that phosphorylates MoxX in response to environmental signals. This chain is Methanol utilization control sensor protein MoxY (moxY), found in Paracoccus denitrificans.